A 347-amino-acid chain; its full sequence is 4-hydroxy-2-oxovalerate aldolase (347 aa).

The 251-residue stretch at 2-252 (ILISDATLRD…DTRTTFERVM (251 aa)) folds into the Pyruvate carboxyltransferase domain. Substrate is bound at residue 10 to 11 (RD). Residue aspartate 11 participates in Mn(2+) binding. The active-site Proton acceptor is histidine 14. The substrate site is built by serine 164 and histidine 191. Mn(2+)-binding residues include histidine 191 and histidine 193.

The protein belongs to the 4-hydroxy-2-oxovalerate aldolase family.

It carries out the reaction (S)-4-hydroxy-2-oxopentanoate = acetaldehyde + pyruvate. The chain is 4-hydroxy-2-oxovalerate aldolase from Burkholderia pseudomallei (strain 1106a).